Reading from the N-terminus, the 208-residue chain is 3-isopropylmalate dehydratase small subunit 2 (208 aa).

The disordered stretch occupies residues 163–208 (EGERLDNASTSAGHGHAGTPLGDDPAKEDGPRPEQASGHQKEEHHA).

This sequence belongs to the LeuD family. LeuD type 2 subfamily. In terms of assembly, heterodimer of LeuC and LeuD.

The catalysed reaction is (2R,3S)-3-isopropylmalate = (2S)-2-isopropylmalate. The protein operates within amino-acid biosynthesis; L-leucine biosynthesis; L-leucine from 3-methyl-2-oxobutanoate: step 2/4. Catalyzes the isomerization between 2-isopropylmalate and 3-isopropylmalate, via the formation of 2-isopropylmaleate. This is 3-isopropylmalate dehydratase small subunit 2 (leuD2) from Deinococcus radiodurans (strain ATCC 13939 / DSM 20539 / JCM 16871 / CCUG 27074 / LMG 4051 / NBRC 15346 / NCIMB 9279 / VKM B-1422 / R1).